The chain runs to 110 residues: Large ribosomal subunit protein uL22 (110 aa).

The protein belongs to the universal ribosomal protein uL22 family. In terms of assembly, part of the 50S ribosomal subunit.

In terms of biological role, this protein binds specifically to 23S rRNA; its binding is stimulated by other ribosomal proteins, e.g. L4, L17, and L20. It is important during the early stages of 50S assembly. It makes multiple contacts with different domains of the 23S rRNA in the assembled 50S subunit and ribosome. Functionally, the globular domain of the protein is located near the polypeptide exit tunnel on the outside of the subunit, while an extended beta-hairpin is found that lines the wall of the exit tunnel in the center of the 70S ribosome. The protein is Large ribosomal subunit protein uL22 of Syntrophus aciditrophicus (strain SB).